Reading from the N-terminus, the 473-residue chain is 3-isopropylmalate dehydratase large subunit (473 aa).

Residues C354, C414, and C417 each contribute to the [4Fe-4S] cluster site.

It belongs to the aconitase/IPM isomerase family. LeuC type 1 subfamily. As to quaternary structure, heterodimer of LeuC and LeuD. Requires [4Fe-4S] cluster as cofactor.

It carries out the reaction (2R,3S)-3-isopropylmalate = (2S)-2-isopropylmalate. The protein operates within amino-acid biosynthesis; L-leucine biosynthesis; L-leucine from 3-methyl-2-oxobutanoate: step 2/4. Catalyzes the isomerization between 2-isopropylmalate and 3-isopropylmalate, via the formation of 2-isopropylmaleate. The polypeptide is 3-isopropylmalate dehydratase large subunit (Mycobacterium ulcerans (strain Agy99)).